The following is a 214-amino-acid chain: Large ribosomal subunit protein uL1 (214 aa).

Belongs to the universal ribosomal protein uL1 family. Component of the large ribosomal subunit.

It is found in the cytoplasm. Functionally, component of the large ribosomal subunit. The ribosome is a large ribonucleoprotein complex responsible for the synthesis of proteins in the cell. The protein is Large ribosomal subunit protein uL1 (RPL10A) of Entamoeba histolytica (strain ATCC 30459 / HM-1:IMSS / ABRM).